The primary structure comprises 232 residues: Phosphate import ATP-binding protein PstB (232 aa).

Positions 1-227 (MFNINMEIKE…PKDRRTENYI (227 aa)) constitute an ABC transporter domain. 18 to 25 (GPSGCGKT) is a binding site for ATP.

Belongs to the ABC transporter superfamily. Phosphate importer (TC 3.A.1.7) family. In terms of assembly, the complex is composed of two ATP-binding proteins (PstB), two transmembrane proteins (PstC and PstA) and a solute-binding protein (PstS).

It is found in the cell membrane. The enzyme catalyses phosphate(out) + ATP + H2O = ADP + 2 phosphate(in) + H(+). Part of the ABC transporter complex PstSACB involved in phosphate import. Responsible for energy coupling to the transport system. The sequence is that of Phosphate import ATP-binding protein PstB from Mycoplasma mycoides subsp. mycoides SC (strain CCUG 32753 / NCTC 10114 / PG1).